Reading from the N-terminus, the 490-residue chain is GTPase Der (490 aa).

2 EngA-type G domains span residues 1-165 and 227-400; these read MRIA…QIPV and LKVA…TIAT. GTP is bound by residues 7–14, 54–58, 117–120, 233–240, 280–284, and 345–348; these read GRPNVGKS, DTGGV, NKAD, GHPNVGKS, DTAGL, and NKWD. The KH-like domain occupies 401–485; that stretch reads TKLSTSLVNK…PFDLEYKAKP (85 aa).

The protein belongs to the TRAFAC class TrmE-Era-EngA-EngB-Septin-like GTPase superfamily. EngA (Der) GTPase family. As to quaternary structure, associates with the 50S ribosomal subunit.

GTPase that plays an essential role in the late steps of ribosome biogenesis. The polypeptide is GTPase Der (Chlamydia trachomatis serovar A (strain ATCC VR-571B / DSM 19440 / HAR-13)).